Consider the following 164-residue polypeptide: Large ribosomal subunit protein eL21x/eL21w (164 aa).

This sequence belongs to the eukaryotic ribosomal protein eL21 family.

The sequence is that of Large ribosomal subunit protein eL21x/eL21w (RPL21E) from Arabidopsis thaliana (Mouse-ear cress).